Here is a 333-residue protein sequence, read N- to C-terminus: COMPASS-like H3K4 histone methylase component WDR5B (333 aa).

WD repeat units lie at residues 1–40, 41–80, 83–122, 126–167, 169–207, 211–252, 253–295, and 298–333; these read MPSG…KTLE, GHTA…LIHR, GHSS…ECLK, GHTN…RMIK, HSMP…CLKT, DKSP…KVYT, GHTN…ILQR, and GHTD…KQDA.

As to quaternary structure, unlike WDR5A, does not interact with RBL or TRO.

This Arabidopsis thaliana (Mouse-ear cress) protein is COMPASS-like H3K4 histone methylase component WDR5B.